Here is a 245-residue protein sequence, read N- to C-terminus: tRNA1(Val) (adenine(37)-N6)-methyltransferase (245 aa).

This sequence belongs to the methyltransferase superfamily. tRNA (adenine-N(6)-)-methyltransferase family.

It localises to the cytoplasm. It carries out the reaction adenosine(37) in tRNA1(Val) + S-adenosyl-L-methionine = N(6)-methyladenosine(37) in tRNA1(Val) + S-adenosyl-L-homocysteine + H(+). Its function is as follows. Specifically methylates the adenine in position 37 of tRNA(1)(Val) (anticodon cmo5UAC). This Shigella boydii serotype 18 (strain CDC 3083-94 / BS512) protein is tRNA1(Val) (adenine(37)-N6)-methyltransferase.